A 215-amino-acid chain; its full sequence is Dual specificity phosphatase 29 (215 aa).

In terms of domain architecture, Tyrosine-protein phosphatase spans 53–201 (HVNEVWPRLH…LRELDKQLVK (149 aa)). 145 to 152 (HCAMGRSR) is a substrate binding site. The Phosphocysteine intermediate role is filled by cysteine 146.

This sequence belongs to the protein-tyrosine phosphatase family. Non-receptor class dual specificity subfamily. In terms of assembly, homodimer. Interacts with PRKAA2.

It localises to the cytoplasm. Its subcellular location is the nucleus. The catalysed reaction is O-phospho-L-tyrosyl-[protein] + H2O = L-tyrosyl-[protein] + phosphate. It catalyses the reaction O-phospho-L-seryl-[protein] + H2O = L-seryl-[protein] + phosphate. The enzyme catalyses O-phospho-L-threonyl-[protein] + H2O = L-threonyl-[protein] + phosphate. Functionally, dual specificity phosphatase able to dephosphorylate phosphotyrosine, phosphoserine and phosphothreonine residues within the same substrate, with a preference for phosphotyrosine as a substrate. Involved in the modulation of intracellular signaling cascades. In skeletal muscle regulates systemic glucose homeostasis by activating, AMPK, an energy sensor protein kinase. Affects MAP kinase signaling though modulation of the MAPK1/2 cascade in skeletal muscle promoting muscle cell differentiation, development and atrophy. The polypeptide is Dual specificity phosphatase 29 (Dusp29) (Rattus norvegicus (Rat)).